We begin with the raw amino-acid sequence, 490 residues long: Cobyric acid synthase (490 aa).

Positions 250–432 (QLEIVVIRLP…LHGLLDNHAW (183 aa)) constitute a GATase cobBQ-type domain. Cysteine 328 (nucleophile) is an active-site residue. Histidine 424 is an active-site residue.

Belongs to the CobB/CobQ family. CobQ subfamily.

The protein operates within cofactor biosynthesis; adenosylcobalamin biosynthesis. Catalyzes amidations at positions B, D, E, and G on adenosylcobyrinic A,C-diamide. NH(2) groups are provided by glutamine, and one molecule of ATP is hydrogenolyzed for each amidation. In Gloeobacter violaceus (strain ATCC 29082 / PCC 7421), this protein is Cobyric acid synthase.